Consider the following 441-residue polypeptide: UDP-N-acetylmuramoylalanine--D-glutamate ligase (441 aa).

Residue 113-119 (GSNAKST) coordinates ATP.

This sequence belongs to the MurCDEF family.

Its subcellular location is the cytoplasm. It carries out the reaction UDP-N-acetyl-alpha-D-muramoyl-L-alanine + D-glutamate + ATP = UDP-N-acetyl-alpha-D-muramoyl-L-alanyl-D-glutamate + ADP + phosphate + H(+). The protein operates within cell wall biogenesis; peptidoglycan biosynthesis. Functionally, cell wall formation. Catalyzes the addition of glutamate to the nucleotide precursor UDP-N-acetylmuramoyl-L-alanine (UMA). The chain is UDP-N-acetylmuramoylalanine--D-glutamate ligase from Alcanivorax borkumensis (strain ATCC 700651 / DSM 11573 / NCIMB 13689 / SK2).